Here is a 464-residue protein sequence, read N- to C-terminus: Signal recognition particle 54 kDa protein (464 aa).

Residues G104–T111, D184–R188, and T242–D245 each bind GTP.

It belongs to the GTP-binding SRP family. SRP54 subfamily. As to quaternary structure, part of the signal recognition particle protein translocation system, which is composed of SRP and FtsY. Archaeal SRP consists of a 7S RNA molecule of 300 nucleotides and two protein subunits: SRP54 and SRP19.

Its subcellular location is the cytoplasm. The catalysed reaction is GTP + H2O = GDP + phosphate + H(+). Involved in targeting and insertion of nascent membrane proteins into the cytoplasmic membrane. Binds to the hydrophobic signal sequence of the ribosome-nascent chain (RNC) as it emerges from the ribosomes. The SRP-RNC complex is then targeted to the cytoplasmic membrane where it interacts with the SRP receptor FtsY. The sequence is that of Signal recognition particle 54 kDa protein from Halorubrum lacusprofundi (strain ATCC 49239 / DSM 5036 / JCM 8891 / ACAM 34).